Consider the following 201-residue polypeptide: Recombination protein RecR (201 aa).

The segment at cysteine 60 to cysteine 75 adopts a C4-type zinc-finger fold. The Toprim domain maps to serine 83–proline 178.

Belongs to the RecR family.

In terms of biological role, may play a role in DNA repair. It seems to be involved in an RecBC-independent recombinational process of DNA repair. It may act with RecF and RecO. This Rhodopseudomonas palustris (strain HaA2) protein is Recombination protein RecR.